The sequence spans 336 residues: Phenylalanine--tRNA ligase alpha subunit (336 aa).

Glutamate 259 contacts Mg(2+).

It belongs to the class-II aminoacyl-tRNA synthetase family. Phe-tRNA synthetase alpha subunit type 1 subfamily. Tetramer of two alpha and two beta subunits. It depends on Mg(2+) as a cofactor.

Its subcellular location is the cytoplasm. The catalysed reaction is tRNA(Phe) + L-phenylalanine + ATP = L-phenylalanyl-tRNA(Phe) + AMP + diphosphate + H(+). The chain is Phenylalanine--tRNA ligase alpha subunit from Tropheryma whipplei (strain Twist) (Whipple's bacillus).